The chain runs to 870 residues: DNA topoisomerase 1 (870 aa).

The Toprim domain occupies 1–128 (MKSPRFRHSQ…RVYKSSFEAA (128 aa)). In terms of domain architecture, Topo IA-type catalytic spans 143–578 (YDGLAYSAKA…QTNAFVQKIT (436 aa)). The interaction with DNA stretch occupies residues 180 to 185 (SSGRVQ). Tyrosine 299 serves as the catalytic O-(5'-phospho-DNA)-tyrosine intermediate. 3 C4-type zinc fingers span residues 603 to 627 (CQCP…HPNC), 693 to 717 (CPKC…QNGC), and 784 to 807 (CPLC…KRGC).

It belongs to the type IA topoisomerase family. Monomer.

It catalyses the reaction ATP-independent breakage of single-stranded DNA, followed by passage and rejoining.. Its function is as follows. Releases the supercoiling and torsional tension of DNA, which is introduced during the DNA replication and transcription, by transiently cleaving and rejoining one strand of the DNA duplex. Introduces a single-strand break via transesterification at a target site in duplex DNA. The scissile phosphodiester is attacked by the catalytic tyrosine of the enzyme, resulting in the formation of a DNA-(5'-phosphotyrosyl)-enzyme intermediate and the expulsion of a 3'-OH DNA strand. The free DNA strand then undergoes passage around the unbroken strand, thus removing DNA supercoils. Finally, in the religation step, the DNA 3'-OH attacks the covalent intermediate to expel the active-site tyrosine and restore the DNA phosphodiester backbone. The protein is DNA topoisomerase 1 (topX) of Bacillus anthracis.